We begin with the raw amino-acid sequence, 70 residues long: Large ribosomal subunit protein bL31 (70 aa).

Lysine 8 is modified (N6-acetyllysine). Residues cysteine 16, cysteine 18, cysteine 37, and cysteine 40 each coordinate Zn(2+).

It belongs to the bacterial ribosomal protein bL31 family. Type A subfamily. As to quaternary structure, part of the 50S ribosomal subunit. It depends on Zn(2+) as a cofactor.

Binds the 23S rRNA. In Shigella flexneri, this protein is Large ribosomal subunit protein bL31.